The primary structure comprises 166 residues: Protein-export protein SecB (166 aa).

This sequence belongs to the SecB family. Homotetramer, a dimer of dimers. One homotetramer interacts with 1 SecA dimer.

The protein resides in the cytoplasm. Its function is as follows. One of the proteins required for the normal export of preproteins out of the cell cytoplasm. It is a molecular chaperone that binds to a subset of precursor proteins, maintaining them in a translocation-competent state. It also specifically binds to its receptor SecA. This Actinobacillus pleuropneumoniae serotype 7 (strain AP76) protein is Protein-export protein SecB.